The following is an 82-amino-acid chain: UPF0213 protein SERP0126 (82 aa).

The region spanning 2–77 is the GIY-YIG domain; that stretch reads DKHFVYIVKC…KTYTRQQKLK (76 aa).

Belongs to the UPF0213 family.

This chain is UPF0213 protein SERP0126, found in Staphylococcus epidermidis (strain ATCC 35984 / DSM 28319 / BCRC 17069 / CCUG 31568 / BM 3577 / RP62A).